A 507-amino-acid chain; its full sequence is Glycerol kinase (507 aa).

Thr-13 lines the ADP pocket. ATP contacts are provided by Thr-13, Thr-14, and Ser-15. A sn-glycerol 3-phosphate-binding site is contributed by Thr-13. ADP is bound at residue Arg-17. 4 residues coordinate sn-glycerol 3-phosphate: Arg-83, Glu-84, Tyr-135, and Asp-245. Glycerol-binding residues include Arg-83, Glu-84, Tyr-135, Asp-245, and Gln-246. Residues Thr-267 and Gly-310 each coordinate ADP. Residues Thr-267, Gly-310, Gln-314, and Gly-411 each coordinate ATP. ADP-binding residues include Gly-411 and Asn-415.

The protein belongs to the FGGY kinase family.

The catalysed reaction is glycerol + ATP = sn-glycerol 3-phosphate + ADP + H(+). It functions in the pathway polyol metabolism; glycerol degradation via glycerol kinase pathway; sn-glycerol 3-phosphate from glycerol: step 1/1. Inhibited by fructose 1,6-bisphosphate (FBP). In terms of biological role, key enzyme in the regulation of glycerol uptake and metabolism. Catalyzes the phosphorylation of glycerol to yield sn-glycerol 3-phosphate. The polypeptide is Glycerol kinase (Halorhodospira halophila (strain DSM 244 / SL1) (Ectothiorhodospira halophila (strain DSM 244 / SL1))).